A 139-amino-acid chain; its full sequence is MPTINQLVKKPRTSKVKKSTAPALNKGYNSHKKKATDLASPQKRGVCTRVGTMTPKKPNSALRKYARVRLSNNIEVNAYIPGIGHNLQEHSVVLIRGGRVKDLPGVRYHIVRGALDTSGVDGRMQGRSLYGAKKPKEKK.

The disordered stretch occupies residues 1 to 44; the sequence is MPTINQLVKKPRTSKVKKSTAPALNKGYNSHKKKATDLASPQKR. The segment covering 9–18 has biased composition (basic residues); sequence KKPRTSKVKK. Asp-102 is modified (3-methylthioaspartic acid).

Belongs to the universal ribosomal protein uS12 family. As to quaternary structure, part of the 30S ribosomal subunit. Contacts proteins S8 and S17. May interact with IF1 in the 30S initiation complex.

In terms of biological role, with S4 and S5 plays an important role in translational accuracy. Functionally, interacts with and stabilizes bases of the 16S rRNA that are involved in tRNA selection in the A site and with the mRNA backbone. Located at the interface of the 30S and 50S subunits, it traverses the body of the 30S subunit contacting proteins on the other side and probably holding the rRNA structure together. The combined cluster of proteins S8, S12 and S17 appears to hold together the shoulder and platform of the 30S subunit. The sequence is that of Small ribosomal subunit protein uS12 from Macrococcus caseolyticus (strain JCSC5402) (Macrococcoides caseolyticum).